The sequence spans 227 residues: Large ribosomal subunit protein bL25 (227 aa).

Positions 199 to 227 (AIAEAQSAEAAEEKAEESAEDEKKDGEEA) are disordered. Residues 209–227 (AEEKAEESAEDEKKDGEEA) show a composition bias toward basic and acidic residues.

The protein belongs to the bacterial ribosomal protein bL25 family. CTC subfamily. Part of the 50S ribosomal subunit; part of the 5S rRNA/L5/L18/L25 subcomplex. Contacts the 5S rRNA. Binds to the 5S rRNA independently of L5 and L18.

This is one of the proteins that binds to the 5S RNA in the ribosome where it forms part of the central protuberance. In Methylobacterium radiotolerans (strain ATCC 27329 / DSM 1819 / JCM 2831 / NBRC 15690 / NCIMB 10815 / 0-1), this protein is Large ribosomal subunit protein bL25.